The chain runs to 563 residues: Rab escort protein 1 (563 aa).

The tract at residues 538–563 (ELFKEETSPAENTTEEENDGGVEIED) is disordered. Positions 550 to 563 (TTEEENDGGVEIED) are enriched in acidic residues.

This sequence belongs to the Rab GDI family. As to quaternary structure, heterotrimer composed of the alpha subunit RGTA, the beta subunit RGTB and REP; within this trimer, RGTA and RGTB form the catalytic component, while REP mediates peptide substrate binding. As to expression, expressed in roots, leaves and flowers.

Its subcellular location is the cytoplasm. Functionally, substrate-binding subunit of the Rab geranylgeranyltransferase (GGTase) complex. Binds unprenylated Rab proteins and presents the substrate peptide to the catalytic component composed of the alpha subunit RGTA and the beta subunit RGTB. Preferentially binds the GDP-bound form of Rab and stimulates geranylgeranylation of various Rab GTPases in vitro. This chain is Rab escort protein 1, found in Arabidopsis thaliana (Mouse-ear cress).